The chain runs to 24 residues: Small ribosomal subunit protein uS5 (24 aa).

This sequence belongs to the universal ribosomal protein uS5 family. Part of the 30S ribosomal subunit. Contacts proteins S4 and S8.

Its function is as follows. With S4 and S12 plays an important role in translational accuracy. In terms of biological role, located at the back of the 30S subunit body where it stabilizes the conformation of the head with respect to the body. The chain is Small ribosomal subunit protein uS5 (rpsE) from Vibrio proteolyticus (Aeromonas proteolytica).